The sequence spans 505 residues: Maturase K (505 aa).

The protein belongs to the intron maturase 2 family. MatK subfamily.

It localises to the plastid. The protein resides in the chloroplast. Its function is as follows. Usually encoded in the trnK tRNA gene intron. Probably assists in splicing its own and other chloroplast group II introns. In Gomphrena pulchella (Globe amaranth), this protein is Maturase K.